The sequence spans 265 residues: Apolipoprotein A-I (265 aa).

A signal peptide spans 1–18 (MKAVVLAVAALFLAGGEA). 2 tandem repeats follow at residues 68–89 (LKLT…EQLG) and 90–111 (PVTQ…QEMN). Residues 68-265 (LKLTENLDTL…EEASKKLSSQ (198 aa)) are 10 X approximate tandem repeats. M110 carries the methionine sulfoxide modification. Residues 112 to 122 (KDLADMKQKVQ) form a 3; half-length repeat. 3 tandem repeats follow at residues 123 to 144 (PYME…QKVE), 145 to 166 (PLST…EKLA), and 167 to 188 (PLGA…TQLA). One copy of the 7; truncated repeat lies at 189–208 (PYSEQMRERLAERLAALRDS). Position 194 is a methionine sulfoxide (M194). Residues 209-230 (PSLAEYQAKAHEHLKTLHEKAQ) form repeat 8. The 9; half-length repeat unit spans residues 231–241 (PALSDLGQGVL). Residues 242 to 265 (PVLESLKATLVGAIEEASKKLSSQ) form repeat 10.

Belongs to the apolipoprotein A1/A4/E family. Homodimer. Interacts with APOA1BP and CLU. Component of a sperm activating protein complex (SPAP), consisting of APOA1, an immunoglobulin heavy chain, an immunoglobulin light chain and albumin. Interacts with NDRG1. Interacts with SCGB3A2. Interacts with NAXE and YJEFN3. In terms of processing, glycosylated. Palmitoylated. Post-translationally, phosphorylation sites are present in the extracellular medium.

Its subcellular location is the secreted. Its function is as follows. Participates in the reverse transport of cholesterol from tissues to the liver for excretion by promoting cholesterol efflux from tissues and by acting as a cofactor for the lecithin cholesterol acyltransferase (LCAT). As part of the SPAP complex, activates spermatozoa motility. This Dipodomys ordii (Ord's kangaroo rat) protein is Apolipoprotein A-I (Apoa1).